Reading from the N-terminus, the 251-residue chain is Small ribosomal subunit protein uS2 (251 aa).

It belongs to the universal ribosomal protein uS2 family.

The sequence is that of Small ribosomal subunit protein uS2 from Nitrosomonas eutropha (strain DSM 101675 / C91 / Nm57).